The chain runs to 842 residues: MNKTTEYIDAMPLSDIEKAALPKTDIRAVHEALDVEHRAYSREDDSPQGSVKARLEQAWPDSLAEGQLIKDNEGRDQLQAMPKATRSSMFPDPWRTNPLGRFWDRLRGRDVTPRYLSRLTKEEQENEQKWRTVGTIRRYILLLLTLAQTVVATWYMKTILPYQGWALINPADMIGQDLWVSFMQLLPYVLQTGILILFAVLFCWVSAGFWTALMGFLQLLIGRDKYSISASTVGNEPLNPEHRTALIMPICNEDVDRVFAGLRATWESVKATGNAAHFDVYILSDSYNPDICVAEQKAWMELIAEVQGEGQIFYRRRRRRVKRKSGNIDDFCRRWGNQYSYMVVLDADSVMTGECLSGLVRLMEANPNAGIIQSSPKASGMDTLYARCQQFATRVYGPLFTAGLHFWQLGESHYWGHNAIIRVKPFIEHCALAPLPGEGSFAGSILSHDFVEAALMRRAGWGVWIAYDLPGSYEELPPNLLDELKRDRRWCHGNLMNFRLFLVKGMHPVHRAVFLTGVMSYLSAPLWFMFLALSTALQVVHALTEPQYFLQPRQLFPVWPQWRPELAIALFASTMVLLFLPKLLSIMLIWCKGTKEYGGFVRVTLSLLLEVLFSVLLAPVRMLFHTVFVVSAFLGWEVVWNSPQRDDDSTPWGEAFMRHGSQLLLGLVWAVGMAWLDLRFLFWLAPIVFSLILSPFVSVVSSRSTVGLRTKRWKLFLIPEEYSPPQVLVDTDKYLAMNRNRTLDDGFMHAVFNPSFNALATAMATARHRASKVLEIARDRHVEQALNETPEKLNRDRRLVLLSDPVTMARLHYRVWNSPERYSSWVNYYQGINLNPLALQKK.

7 helical membrane passes run 140-160 (ILLL…KTIL), 194-214 (ILIL…TALM), 513-533 (VFLT…FLAL), 570-590 (LFAS…MLIW), 615-635 (VLLA…AFLG), 656-676 (FMRH…MAWL), and 680-700 (FLFW…VSVV).

It belongs to the glycosyltransferase 2 family. OpgH subfamily.

The protein localises to the cell inner membrane. Its pathway is glycan metabolism; osmoregulated periplasmic glucan (OPG) biosynthesis. Involved in the biosynthesis of osmoregulated periplasmic glucans (OPGs). The sequence is that of Glucans biosynthesis glucosyltransferase H from Citrobacter koseri (strain ATCC BAA-895 / CDC 4225-83 / SGSC4696).